A 127-amino-acid chain; its full sequence is Fluoride-specific ion channel FluC 1 (127 aa).

A run of 4 helical transmembrane segments spans residues Thr-4–Leu-24, Val-35–Phe-55, Thr-71–Ile-91, and Gly-101–Val-121. 2 residues coordinate Na(+): Gly-75 and Thr-78.

It belongs to the fluoride channel Fluc/FEX (TC 1.A.43) family.

Its subcellular location is the cell inner membrane. The catalysed reaction is fluoride(in) = fluoride(out). Na(+) is not transported, but it plays an essential structural role and its presence is essential for fluoride channel function. Its function is as follows. Fluoride-specific ion channel. Important for reducing fluoride concentration in the cell, thus reducing its toxicity. The chain is Fluoride-specific ion channel FluC 1 from Yersinia pestis.